We begin with the raw amino-acid sequence, 491 residues long: Nuatigenin 3-beta-glucosyltransferase (491 aa).

Catalysis depends on His20, which acts as the Proton acceptor. Position 20 (His20) interacts with an anthocyanidin. The active-site Charge relay is Asp125. UDP-alpha-D-glucose is bound by residues Ala352, Gln354, His369, Trp372, Asn373, Ser374, and Glu377. Ala392 contributes to the an anthocyanidin binding site. Residues Glu393 and Gln394 each contribute to the UDP-alpha-D-glucose site.

Belongs to the UDP-glycosyltransferase family. In terms of tissue distribution, expressed in roots, stems and leaves.

It catalyses the reaction nuatigenin + UDP-alpha-D-glucose = nuatigenin 3-beta-D-glucopyranoside + UDP + H(+). The enzyme catalyses diosgenin + UDP-alpha-D-glucose = diosgenin 3-O-beta-D-glucoside + UDP + H(+). It carries out the reaction tigogenin + UDP-alpha-D-glucose = tigogenin 3-O-beta-D-glucopyranoside + UDP + H(+). The catalysed reaction is solasodine + UDP-alpha-D-glucose = solasodine 3-beta-D-glucoside + UDP + H(+). It catalyses the reaction solanidine + UDP-alpha-D-glucose = solanidine 3-O-beta-D-glucopyranoside + UDP + H(+). The enzyme catalyses tomatidine + UDP-alpha-D-glucose = tomatidine 3-O-beta-D-glucopyranoside + UDP + H(+). Its function is as follows. Glucosyltransferase involved in steroid saponin biosynthesis. Catalyzes the 3-O-glucosylation of steroidal sapogenins, such as diosgenin, nuatigenin and tigogenin. Can glucosylate steroidal alkaloids, such as solanidine, solasodine and tomatidine. This chain is Nuatigenin 3-beta-glucosyltransferase, found in Solanum aculeatissimum (Dutch eggplant).